A 504-amino-acid polypeptide reads, in one-letter code: Maturase K (504 aa).

Belongs to the intron maturase 2 family. MatK subfamily.

The protein resides in the plastid. Its subcellular location is the chloroplast. Its function is as follows. Usually encoded in the trnK tRNA gene intron. Probably assists in splicing its own and other chloroplast group II introns. The chain is Maturase K from Erythrina crista-galli (Cockspur coral tree).